The chain runs to 264 residues: MQQYLDLMRHVLEHGHDKADRTGTGTRSVFGYQMRFDLAAGFPLVTTKKCHLRSIIHELLWFLSGDTNIRYLKENGVSIWDEWADENGDLGPVYGYQWRSWPAPDGRHIDQISQLLDMIKKNPDSRRLIVSAWNPALVDQMALPPCHSLFQFYVANGRLSCQLYQRSADIFLGVPFNIASYALLTMMVAQVCGLQPGDFVHTLGDAHLYSNHLEQARLQLTRDPRPLPTMKLNPEVKDLFAFTFDDFALEGYDPHPHIKAQVAV.

Position 21 (Arg-21) interacts with dUMP. His-51 lines the (6R)-5,10-methylene-5,6,7,8-tetrahydrofolate pocket. A dUMP-binding site is contributed by 126 to 127 (RR). Cys-146 serves as the catalytic Nucleophile. DUMP-binding positions include 166–169 (RSAD), Asn-177, and 207–209 (HLY). Asp-169 contributes to the (6R)-5,10-methylene-5,6,7,8-tetrahydrofolate binding site. Residue Ala-263 coordinates (6R)-5,10-methylene-5,6,7,8-tetrahydrofolate.

The protein belongs to the thymidylate synthase family. Bacterial-type ThyA subfamily. As to quaternary structure, homodimer.

It localises to the cytoplasm. It catalyses the reaction dUMP + (6R)-5,10-methylene-5,6,7,8-tetrahydrofolate = 7,8-dihydrofolate + dTMP. It functions in the pathway pyrimidine metabolism; dTTP biosynthesis. Functionally, catalyzes the reductive methylation of 2'-deoxyuridine-5'-monophosphate (dUMP) to 2'-deoxythymidine-5'-monophosphate (dTMP) while utilizing 5,10-methylenetetrahydrofolate (mTHF) as the methyl donor and reductant in the reaction, yielding dihydrofolate (DHF) as a by-product. This enzymatic reaction provides an intracellular de novo source of dTMP, an essential precursor for DNA biosynthesis. The polypeptide is Thymidylate synthase (Chromobacterium violaceum (strain ATCC 12472 / DSM 30191 / JCM 1249 / CCUG 213 / NBRC 12614 / NCIMB 9131 / NCTC 9757 / MK)).